A 78-amino-acid chain; its full sequence is Apolipoprotein C-I (78 aa).

Positions 1–26 are cleaved as a signal peptide; sequence MRLILWLPVLVVVLLMVLEGPAPAQG.

The protein belongs to the apolipoprotein C1 family.

Its subcellular location is the secreted. In terms of biological role, inhibitor of lipoprotein binding to the low density lipoprotein (LDL) receptor, LDL receptor-related protein, and very low density lipoprotein (VLDL) receptor. Associates with high density lipoproteins (HDL) and the triacylglycerol-rich lipoproteins in the plasma and makes up about 10% of the protein of the VLDL and 2% of that of HDL. Appears to interfere directly with fatty acid uptake and is also the major plasma inhibitor of cholesteryl ester transfer protein (CETP). Binds free fatty acids and reduces their intracellular esterification. Modulates the interaction of APOE with beta-migrating VLDL and inhibits binding of beta-VLDL to the LDL receptor-related protein. In Lynx pardinus (Iberian lynx), this protein is Apolipoprotein C-I (APOC1).